Here is a 501-residue protein sequence, read N- to C-terminus: Aldehyde dehydrogenase 1A1 (501 aa).

Ser2 carries the N-acetylserine modification. 2 positions are modified to N6-acetyllysine: Lys91 and Lys128. NAD(+) contacts are provided by residues 167–170 (IPWN), 193–196 (KPAE), 226–227 (GP), and 246–247 (GS). At Lys252 the chain carries N6-acetyllysine. Catalysis depends on Glu269, which acts as the Proton acceptor. Residue 269–271 (ELG) participates in NAD(+) binding. Cys303 functions as the Nucleophile in the catalytic mechanism. Positions 336 to 501 (LTPGATQGPQ…VTVKISQKNS (166 aa)) are mediates interaction with PRMT3. Thr337 is modified (phosphothreonine). 349–353 (EQYDK) contacts NAD(+). N6-acetyllysine occurs at positions 353 and 367. An NAD(+)-binding site is contributed by 400 to 402 (EIF). Lys410 bears the N6-acetyllysine mark. The residue at position 413 (Ser413) is a Phosphoserine. Lys419 and Lys495 each carry N6-acetyllysine.

This sequence belongs to the aldehyde dehydrogenase family. Homotetramer. Interacts with PRMT3; the interaction is direct, inhibits ALDH1A1 aldehyde dehydrogenase activity and is independent of the methyltransferase activity of PRMT3. Post-translationally, the N-terminus is blocked most probably by acetylation.

The protein localises to the cytoplasm. It localises to the cytosol. Its subcellular location is the cell projection. The protein resides in the axon. It carries out the reaction an aldehyde + NAD(+) + H2O = a carboxylate + NADH + 2 H(+). The enzyme catalyses all-trans-retinal + NAD(+) + H2O = all-trans-retinoate + NADH + 2 H(+). It catalyses the reaction 9-cis-retinal + NAD(+) + H2O = 9-cis-retinoate + NADH + 2 H(+). The catalysed reaction is 11-cis-retinal + NAD(+) + H2O = 11-cis-retinoate + NADH + 2 H(+). It carries out the reaction 13-cis-retinal + NAD(+) + H2O = 13-cis-retinoate + NADH + 2 H(+). The enzyme catalyses 3-deoxyglucosone + NAD(+) + H2O = 2-dehydro-3-deoxy-D-gluconate + NADH + 2 H(+). It catalyses the reaction (E)-4-hydroxynon-2-enal + NAD(+) + H2O = (E)-4-hydroxynon-2-enoate + NADH + 2 H(+). The catalysed reaction is malonaldehyde + NAD(+) + H2O = 3-oxopropanoate + NADH + 2 H(+). It carries out the reaction hexanal + NAD(+) + H2O = hexanoate + NADH + 2 H(+). The enzyme catalyses propanal + NAD(+) + H2O = propanoate + NADH + 2 H(+). It catalyses the reaction acetaldehyde + NAD(+) + H2O = acetate + NADH + 2 H(+). The catalysed reaction is benzaldehyde + NAD(+) + H2O = benzoate + NADH + 2 H(+). It carries out the reaction 4-aminobutanal + NAD(+) + H2O = 4-aminobutanoate + NADH + 2 H(+). The protein operates within cofactor metabolism; retinol metabolism. In terms of biological role, cytosolic dehydrogenase that catalyzes the irreversible oxidation of a wide range of aldehydes to their corresponding carboxylic acid. Functions downstream of retinol dehydrogenases and catalyzes the oxidation of retinaldehyde into retinoic acid, the second step in the oxidation of retinol/vitamin A into retinoic acid. This pathway is crucial to control the levels of retinol and retinoic acid, two important molecules which excess can be teratogenic and cytotoxic. Also oxidizes aldehydes resulting from lipid peroxidation like (E)-4-hydroxynon-2-enal/HNE, malonaldehyde and hexanal that form protein adducts and are highly cytotoxic. By participating for instance to the clearance of (E)-4-hydroxynon-2-enal/HNE in the lens epithelium prevents the formation of HNE-protein adducts and lens opacification. Also functions downstream of fructosamine-3-kinase in the fructosamine degradation pathway by catalyzing the oxidation of 3-deoxyglucosone, the carbohydrate product of fructosamine 3-phosphate decomposition, which is itself a potent glycating agent that may react with lysine and arginine side-chains of proteins. Also has an aminobutyraldehyde dehydrogenase activity and is probably part of an alternative pathway for the biosynthesis of GABA/4-aminobutanoate in midbrain, thereby playing a role in GABAergic synaptic transmission. The sequence is that of Aldehyde dehydrogenase 1A1 from Macaca fascicularis (Crab-eating macaque).